The sequence spans 200 residues: 3-isopropylmalate dehydratase small subunit (200 aa).

The protein belongs to the LeuD family. LeuD type 1 subfamily. Heterodimer of LeuC and LeuD.

It carries out the reaction (2R,3S)-3-isopropylmalate = (2S)-2-isopropylmalate. The protein operates within amino-acid biosynthesis; L-leucine biosynthesis; L-leucine from 3-methyl-2-oxobutanoate: step 2/4. Catalyzes the isomerization between 2-isopropylmalate and 3-isopropylmalate, via the formation of 2-isopropylmaleate. In Vibrio parahaemolyticus serotype O3:K6 (strain RIMD 2210633), this protein is 3-isopropylmalate dehydratase small subunit.